The following is a 130-amino-acid chain: MIVGAGGGADMNARGAMGRYGETLAARRLTGAGMTVLERNWRCGRTGEIDIVARDGDVLVVCEVKTRRGGAFEHPMAAVTPDKAERLRRLAERWIQTHGGAPPGGVRIDLVGVLLPQRGAPVVEHARGVA.

This sequence belongs to the UPF0102 family.

In Streptomyces coelicolor (strain ATCC BAA-471 / A3(2) / M145), this protein is UPF0102 protein SCO5602.